A 195-amino-acid chain; its full sequence is 3-isopropylmalate dehydratase small subunit (195 aa).

The protein belongs to the LeuD family. LeuD type 1 subfamily. Heterodimer of LeuC and LeuD.

It catalyses the reaction (2R,3S)-3-isopropylmalate = (2S)-2-isopropylmalate. It functions in the pathway amino-acid biosynthesis; L-leucine biosynthesis; L-leucine from 3-methyl-2-oxobutanoate: step 2/4. In terms of biological role, catalyzes the isomerization between 2-isopropylmalate and 3-isopropylmalate, via the formation of 2-isopropylmaleate. The protein is 3-isopropylmalate dehydratase small subunit of Parafrankia sp. (strain EAN1pec).